Consider the following 158-residue polypeptide: MDEPSEKVDPVVNPETQMYDGSQREDEGDSPDDSEILQPETLVKVMKKLTLNPSAKPTKYHRRQRVRLQVKSQPVENRSERIMREVQSAFPRRRVRTLLSVLKDPIARMRRFVRIEQRQRQLEGNERRDEPFRCLCTFCHYQRWDPSENAKIGQNQKN.

2 disordered regions span residues 1–38 (MDEP…EILQ) and 54–78 (SAKP…VENR). Residues 26–35 (DEGDSPDDSE) are compositionally biased toward acidic residues. The segment covering 58 to 68 (TKYHRRQRVRL) has biased composition (basic residues).

It localises to the nucleus. The protein localises to the cytoplasm. In terms of biological role, primordial germ cell (PGCs)-specific protein involved in epigenetic chromatin reprogramming in the zygote following fertilization. In zygotes, DNA demethylation occurs selectively in the paternal pronucleus before the first cell division, while the adjacent maternal pronucleus and certain paternally-imprinted loci are protected from this process. Participates in protection of DNA methylation in the maternal pronucleus by preventing conversion of 5mC to 5hmC: specifically recognizes and binds histone H3 dimethylated at 'Lys-9' (H3K9me2) on maternal genome, and protects maternal genome from TET3-mediated conversion to 5hmC and subsequent DNA demethylation. Does not bind paternal chromatin, which is mainly packed into protamine and does not contain much H3K9me2 mark. Also protects imprinted loci that are marked with H3K9me2 in mature sperm from DNA demethylation in early embryogenesis. May be important for the totipotent/pluripotent states continuing through preimplantation development. Also involved in chromatin condensation in oocytogenesis. The sequence is that of Developmental pluripotency-associated protein 3 (Dppa3) from Rattus norvegicus (Rat).